The sequence spans 251 residues: Probable transcriptional regulatory protein TGRD_462 (251 aa).

It belongs to the TACO1 family.

The protein resides in the cytoplasm. In Endomicrobium trichonymphae, this protein is Probable transcriptional regulatory protein TGRD_462.